The primary structure comprises 156 residues: Ribosome maturation factor RimP (156 aa).

This sequence belongs to the RimP family.

Its subcellular location is the cytoplasm. Its function is as follows. Required for maturation of 30S ribosomal subunits. In Lysinibacillus sphaericus (strain C3-41), this protein is Ribosome maturation factor RimP.